The chain runs to 397 residues: Gamma tubulin complex adapter mto2 (397 aa).

Residues 1 to 13 (MSEHNYQSDREVA) are compositionally biased toward basic and acidic residues. 3 disordered regions span residues 1-44 (MSEH…WRAG), 269-298 (YTSS…PFPS), and 346-397 (RSDP…TPSP). Polar residues-rich tracts occupy residues 22-37 (ASAN…STPR), 269-281 (YTSS…QRMA), 352-369 (RHVS…SPTS), and 382-397 (SPAS…TPSP). Serine 366 and serine 396 each carry phosphoserine.

As to quaternary structure, interacts with mto1; the interaction is direct and required for efficient binding to the gamma-tubulin complex. Interacts with gamma tubulin complex subunits alp4, alp6 and gtb1.

It is found in the cytoplasm. It localises to the cytoskeleton. The protein localises to the microtubule organizing center. The protein resides in the spindle pole body. Functionally, acts together with mto1 to promote nucleation of at least a subset of cytoplasmic microtubules, by recruiting the gamma-tubulin complex to the interphase microtubule organizing center (iMTOC) and to the equatorial MTOC (eMTOC) during anaphase. Does not appear to be required for cytoplasmic astral microtubule nucleation from the spindle pole body (SPB). Required to establish the eMTOC, and thereby to tether the cytokinetic actin ring. The sequence is that of Gamma tubulin complex adapter mto2 from Schizosaccharomyces pombe (strain 972 / ATCC 24843) (Fission yeast).